An 819-amino-acid polypeptide reads, in one-letter code: MKEYKPQEIESKWQGVWSEKKVFETPQYSDKKKYYALVMFPYPSGTLHVGHVKNYVIGDIVARYKRMQGYNVLHPFGYDAFGLPAENAAIAHKIHPKKWTLDNINVIRGQIKKIGISYDWNREVITCTEDYYKWTQWVFLKLYEAGLAYKKPGAVNWCPSCQTVLANEQVKDGKCERCGTTVTMKYLEQWYFKITDYAEKLLEGLDRLPGWPEHVKTMQRNWIGKSTGAEVDFPVDGMDRKIRIFTTRPDTIYGVTFMAIAPESPLVMELVTEDKKKEVEEFLAKVALEDRFKRTSVEAKKEGVFLGRYAINPLTNEKIPIYVANYILYEYGTGAIMAVPAHDQRDYDFAKTYNLPIKQVIKPKDGEWNINERPYEEEGIMINSGPFDGLESSKGIEEVTKYIEEKGFGKKSVQYKLRDWLISRQRYWGAPIPIVYCEKCGIVPVPEKDLPVRLPENVEFLPTGQSPLTLSEEFKHTTCPKCGGPAHREVETMDTFVDSSWYFLRYVNPKLDDKPFESDDVNYWLPVDQYIGGVEHAVLHLLYSRFITKVLHDLGYLKFDEPFENLFTQGMIYKDGWKMSKSKGNVVSPDDMINKYGADTLRMYILFMAPPEKDAEWNDAGIDGVNRFIKRLWNNYYKILDIINSNDTKNENEFGKEEKNLRRKLHAMIKKIKEDIEGGFKFNTAIAGLMEFNNQLSDYLENTKSPNKKLLREIAEKVVLILSPFAPHMAEEMWHDLGKETLIVEEKWPEYDPEALKEDELTIVVQVNGKVRGKITVPADASEEEIKNRAVENAGKFLEGKTIVNTIYVKGKLVNIVIK.

Residues 41-51 (PYPSGTLHVGH) carry the 'HIGH' region motif. Residues 578–582 (KMSKS) carry the 'KMSKS' region motif. K581 contacts ATP.

It belongs to the class-I aminoacyl-tRNA synthetase family.

The protein localises to the cytoplasm. It catalyses the reaction tRNA(Leu) + L-leucine + ATP = L-leucyl-tRNA(Leu) + AMP + diphosphate. This is Leucine--tRNA ligase from Fervidobacterium nodosum (strain ATCC 35602 / DSM 5306 / Rt17-B1).